Consider the following 363-residue polypeptide: Cyanuric acid amidohydrolase (363 aa).

Positions Met-1–Pro-103 are RU A. Substrate contacts are provided by residues Arg-51 and Ser-82–Gly-83. The tract at residues Gly-111–Pro-247 is RU B. Lys-161 is an active-site residue. Substrate-binding positions include Arg-193 and Ser-230–Ala-231. Catalysis depends on Ser-230, which acts as the Nucleophile. Residues Tyr-253–Ser-363 are RU C. A Mg(2+)-binding site is contributed by Glu-297. Substrate-binding positions include Arg-324 and Ser-343–Gly-344. Ala-346, Gln-349, Gly-350, Pro-351, and Gly-354 together coordinate Mg(2+).

Belongs to the cyclic amide hydrolase (CyAH) family. In terms of assembly, homotetramer.

It carries out the reaction cyanurate + H2O = 1-carboxybiuret + H(+). It participates in xenobiotic degradation; atrazine degradation; biuret from cyanurate: step 1/1. Its activity is regulated as follows. Inhibited by barbituric acid. Functionally, responsible for the hydrolysis of cyanuric acid, an intermediate formed during catabolism of s-triazine based compounds in herbicides such as atrazine and polymers such as melamine. Catalyzes the hydrolytic opening of the s-triazine ring of cyanuric acid (2,4,6-trihydroxy-s-triazine) to yield carbon dioxide and carboxybiuret, which spontaneously decarboxylates to biuret. The sequence is that of Cyanuric acid amidohydrolase from Ectopseudomonas oleovorans (strain CECT 5344) (Pseudomonas pseudoalcaligenes).